A 149-amino-acid chain; its full sequence is Urease accessory protein UreE (149 aa).

This sequence belongs to the UreE family.

Its subcellular location is the cytoplasm. In terms of biological role, involved in urease metallocenter assembly. Binds nickel. Probably functions as a nickel donor during metallocenter assembly. This Prochlorococcus marinus (strain AS9601) protein is Urease accessory protein UreE.